The sequence spans 389 residues: ELAV-like protein 2 (389 aa).

3 consecutive RRM domains span residues 66-145 (TNLI…YARP), 153-233 (ANLY…FANN), and 306-384 (WCIF…FKTS).

It belongs to the RRM elav family. Part of a ribonucleoprotein (RNP) complex, at least composed of elavl1/elrA and/or elavl2/elrB, igf2bp3/vg1RBP, ddx6/Xp54, ybx2/frgy2, lsm14b/rap55b and, in a subset of RNP complexes, stau1/staufen. Binds RNA as a homooligomer. As to expression, expressed in brain, testis and ovary. Ovarian expression is restricted to follicle cells surrounding the oocyte. From the early tailbud stage, expression is neural-specific and is seen in both the central and peripheral nervous system in differentiating neurons but not proliferating precursors. Expressed in the retina from stage 32 with expression becoming restricted to the ganglion cell layer by later stages.

It localises to the cytoplasm. Its subcellular location is the cell cortex. Functionally, binds to poly-U elements and AU-rich elements (AREs) in the 3'-UTR of target mRNAs. Required for the vegetal localization of vg1 mRNA. Probably required for nervous system development. This is ELAV-like protein 2 (elavl2) from Xenopus laevis (African clawed frog).